The sequence spans 483 residues: tRNA sulfurtransferase (483 aa).

The region spanning 61–165 (AEVLEILTTT…DELLNQVIAR (105 aa)) is the THUMP domain. Residues 183-184 (LI), K265, G287, and Q296 each bind ATP. C344 and C457 are oxidised to a cystine. The region spanning 405-483 (EEGNAVVLDI…GFNNVKVYRP (79 aa)) is the Rhodanese domain. C457 serves as the catalytic Cysteine persulfide intermediate.

It belongs to the ThiI family.

The protein localises to the cytoplasm. It catalyses the reaction [ThiI sulfur-carrier protein]-S-sulfanyl-L-cysteine + a uridine in tRNA + 2 reduced [2Fe-2S]-[ferredoxin] + ATP + H(+) = [ThiI sulfur-carrier protein]-L-cysteine + a 4-thiouridine in tRNA + 2 oxidized [2Fe-2S]-[ferredoxin] + AMP + diphosphate. The enzyme catalyses [ThiS sulfur-carrier protein]-C-terminal Gly-Gly-AMP + S-sulfanyl-L-cysteinyl-[cysteine desulfurase] + AH2 = [ThiS sulfur-carrier protein]-C-terminal-Gly-aminoethanethioate + L-cysteinyl-[cysteine desulfurase] + A + AMP + 2 H(+). Its pathway is cofactor biosynthesis; thiamine diphosphate biosynthesis. Catalyzes the ATP-dependent transfer of a sulfur to tRNA to produce 4-thiouridine in position 8 of tRNAs, which functions as a near-UV photosensor. Also catalyzes the transfer of sulfur to the sulfur carrier protein ThiS, forming ThiS-thiocarboxylate. This is a step in the synthesis of thiazole, in the thiamine biosynthesis pathway. The sulfur is donated as persulfide by IscS. The sequence is that of tRNA sulfurtransferase from Vibrio cholerae serotype O1 (strain ATCC 39315 / El Tor Inaba N16961).